The primary structure comprises 489 residues: N-succinylglutamate 5-semialdehyde dehydrogenase (489 aa).

223 to 228 lines the NAD(+) pocket; that stretch reads GSSRTG. Residues Glu-246 and Cys-280 contribute to the active site.

Belongs to the aldehyde dehydrogenase family. AstD subfamily.

It carries out the reaction N-succinyl-L-glutamate 5-semialdehyde + NAD(+) + H2O = N-succinyl-L-glutamate + NADH + 2 H(+). Its pathway is amino-acid degradation; L-arginine degradation via AST pathway; L-glutamate and succinate from L-arginine: step 4/5. Its function is as follows. Catalyzes the NAD-dependent reduction of succinylglutamate semialdehyde into succinylglutamate. The protein is N-succinylglutamate 5-semialdehyde dehydrogenase of Aeromonas salmonicida (strain A449).